Consider the following 570-residue polypeptide: Proline--tRNA ligase (570 aa).

The protein belongs to the class-II aminoacyl-tRNA synthetase family. ProS type 1 subfamily. In terms of assembly, homodimer.

It is found in the cytoplasm. It carries out the reaction tRNA(Pro) + L-proline + ATP = L-prolyl-tRNA(Pro) + AMP + diphosphate. Its function is as follows. Catalyzes the attachment of proline to tRNA(Pro) in a two-step reaction: proline is first activated by ATP to form Pro-AMP and then transferred to the acceptor end of tRNA(Pro). As ProRS can inadvertently accommodate and process non-cognate amino acids such as alanine and cysteine, to avoid such errors it has two additional distinct editing activities against alanine. One activity is designated as 'pretransfer' editing and involves the tRNA(Pro)-independent hydrolysis of activated Ala-AMP. The other activity is designated 'posttransfer' editing and involves deacylation of mischarged Ala-tRNA(Pro). The misacylated Cys-tRNA(Pro) is not edited by ProRS. The chain is Proline--tRNA ligase from Neisseria meningitidis serogroup A / serotype 4A (strain DSM 15465 / Z2491).